The chain runs to 998 residues: RNA-directed RNA polymerase (998 aa).

Residues 21–43 (IVIVSGCGAVAYCISKFWGYGAI) form a helical membrane-spanning segment. Residues 44–998 (APYPQSGGNR…AQPGAPTNPK (955 aa)) are cytoplasmic. A capping region spans residues 91–282 (NGHAVSGAVR…LVYTIPQHTV (192 aa)). The active-site For RdRp/TNTase activity is Asp692. Residues 901 to 998 (AKQTRSNSGT…AQPGAPTNPK (98 aa)) are disordered. Over residues 985 to 998 (PKAGAQPGAPTNPK) the composition is skewed to low complexity.

The protein belongs to the nodaviridae RNA polymerase family. As to quaternary structure, homododecamer. Forms 2 stacked rings of 35-nm in diameter, arranged in a crown-like structure at the opening of virus-induced replication vesicles. Interacts with protein B2. Mn(2+) serves as cofactor.

It is found in the host mitochondrion outer membrane. It carries out the reaction RNA(n) + a ribonucleoside 5'-triphosphate = RNA(n+1) + diphosphate. Its function is as follows. RNA-dependent RNA polymerase, which replicates the viral genome composed of 2 RNA segments, RNA1 and RNA2. Does not need an exogenous primer. Also possesses a terminal nucleotidyl transferase (TNTase) activity. The TNTase catalyzes the addition of nucleotide to the 3'-end of plus- and minus-stranded RNAs, probably to repair the 3'-end nucleotide loss. Forms the open necked connection to the cytosol of the virus-induced replication vesicles. Mediates viral RNA1 recruitment. The sequence is that of RNA-directed RNA polymerase from Hepialidae (ghost moths).